The sequence spans 258 residues: Thiamine thiazole synthase (258 aa).

Residues Ser36, 55 to 56 (ER), Gly63, Ile127, and 153 to 155 (HVD) contribute to the NAD(+) site. Fe cation contacts are provided by Asp155 and His170. An NAD(+)-binding site is contributed by Met224. Arg234 is a binding site for glycine.

Belongs to the THI4 family. In terms of assembly, homooctamer; tetramer of dimers. Requires Fe(2+) as cofactor.

The enzyme catalyses hydrogen sulfide + glycine + NAD(+) = ADP-5-ethyl-4-methylthiazole-2-carboxylate + nicotinamide + 3 H2O + H(+). It participates in cofactor biosynthesis; thiamine diphosphate biosynthesis. Involved in the biosynthesis of the thiazole moiety of thiamine. Catalyzes the conversion of NAD and glycine to adenosine diphosphate 5-(2-hydroxyethyl)-4-methylthiazole-2-carboxylate (ADT), an adenylated thiazole intermediate, using free sulfide as a source of sulfur. The chain is Thiamine thiazole synthase from Methanothermobacter thermautotrophicus (strain ATCC 29096 / DSM 1053 / JCM 10044 / NBRC 100330 / Delta H) (Methanobacterium thermoautotrophicum).